The primary structure comprises 346 residues: S-adenosylmethionine:tRNA ribosyltransferase-isomerase (346 aa).

Belongs to the QueA family. Monomer.

It localises to the cytoplasm. It catalyses the reaction 7-aminomethyl-7-carbaguanosine(34) in tRNA + S-adenosyl-L-methionine = epoxyqueuosine(34) in tRNA + adenine + L-methionine + 2 H(+). The protein operates within tRNA modification; tRNA-queuosine biosynthesis. Its function is as follows. Transfers and isomerizes the ribose moiety from AdoMet to the 7-aminomethyl group of 7-deazaguanine (preQ1-tRNA) to give epoxyqueuosine (oQ-tRNA). The polypeptide is S-adenosylmethionine:tRNA ribosyltransferase-isomerase (Neisseria meningitidis serogroup C (strain 053442)).